The primary structure comprises 666 residues: Putative cysteine-rich receptor-like protein kinase 31 (666 aa).

The first 23 residues, 1–23, serve as a signal peptide directing secretion; the sequence is MCLNTLCAILCFVLTVSFGFVSA. Gnk2-homologous domains follow at residues 24-130 and 136-245; these read QKCG…NNSF and LEPT…GYKY. The Extracellular segment spans residues 24–280; it reads QKCGESVFFR…PDGKKISTGV (257 aa). Asparagine 52, asparagine 62, asparagine 104, asparagine 127, and asparagine 151 each carry an N-linked (GlcNAc...) asparagine glycan. Residues 281-301 traverse the membrane as a helical segment; the sequence is IVAIVVSAVIFVVLVALGLVI. Topologically, residues 302–666 are cytoplasmic; sequence WKRRQSYKTL…SASITRATPR (365 aa). One can recognise a Protein kinase domain in the interval 339 to 616; that stretch reads FSRNNKLGQG…IFQMLTNSSI (278 aa). ATP contacts are provided by residues 345–353 and lysine 367; that span reads LGQGGFGEV. Tyrosine 412 carries the phosphotyrosine modification. The Proton acceptor role is filled by aspartate 464. Phosphoserine is present on serine 468. A Phosphothreonine modification is found at threonine 504. Phosphotyrosine is present on tyrosine 512.

This sequence belongs to the protein kinase superfamily. Ser/Thr protein kinase family. CRK subfamily.

The protein resides in the membrane. It carries out the reaction L-seryl-[protein] + ATP = O-phospho-L-seryl-[protein] + ADP + H(+). It catalyses the reaction L-threonyl-[protein] + ATP = O-phospho-L-threonyl-[protein] + ADP + H(+). In Arabidopsis thaliana (Mouse-ear cress), this protein is Putative cysteine-rich receptor-like protein kinase 31 (CRK31).